Reading from the N-terminus, the 852-residue chain is Alanine--tRNA ligase (852 aa).

Positions 554, 558, 656, and 660 each coordinate Zn(2+).

Belongs to the class-II aminoacyl-tRNA synthetase family. Requires Zn(2+) as cofactor.

The protein localises to the cytoplasm. The catalysed reaction is tRNA(Ala) + L-alanine + ATP = L-alanyl-tRNA(Ala) + AMP + diphosphate. Catalyzes the attachment of alanine to tRNA(Ala) in a two-step reaction: alanine is first activated by ATP to form Ala-AMP and then transferred to the acceptor end of tRNA(Ala). Also edits incorrectly charged Ser-tRNA(Ala) and Gly-tRNA(Ala) via its editing domain. This Campylobacter concisus (strain 13826) protein is Alanine--tRNA ligase.